The following is a 190-amino-acid chain: GMP synthase [glutamine-hydrolyzing] subunit A (190 aa).

Positions 2-189 constitute a Glutamine amidotransferase type-1 domain; the sequence is TILVINNKGQ…YEICKKRCNN (188 aa). The Nucleophile role is filled by Cys76. Catalysis depends on residues His163 and Glu165.

In terms of assembly, heterodimer composed of a glutamine amidotransferase subunit (A) and a GMP-binding subunit (B).

It carries out the reaction XMP + L-glutamine + ATP + H2O = GMP + L-glutamate + AMP + diphosphate + 2 H(+). The protein operates within purine metabolism; GMP biosynthesis; GMP from XMP (L-Gln route): step 1/1. Its function is as follows. Catalyzes the synthesis of GMP from XMP. This Methanobrevibacter smithii (strain ATCC 35061 / DSM 861 / OCM 144 / PS) protein is GMP synthase [glutamine-hydrolyzing] subunit A.